We begin with the raw amino-acid sequence, 328 residues long: D-cysteine desulfhydrase (328 aa).

Residue K51 is modified to N6-(pyridoxal phosphate)lysine.

It belongs to the ACC deaminase/D-cysteine desulfhydrase family. As to quaternary structure, homodimer. Pyridoxal 5'-phosphate is required as a cofactor.

It carries out the reaction D-cysteine + H2O = hydrogen sulfide + pyruvate + NH4(+) + H(+). Catalyzes the alpha,beta-elimination reaction of D-cysteine and of several D-cysteine derivatives. It could be a defense mechanism against D-cysteine. In Salmonella agona (strain SL483), this protein is D-cysteine desulfhydrase.